Here is a 152-residue protein sequence, read N- to C-terminus: NADH-ubiquinone oxidoreductase chain 4 (152 aa).

4 helical membrane-spanning segments follow: residues 2–22 (FSGA…YFCL), 43–63 (ILLP…LALP), 84–104 (ITIV…LHMF), and 128–148 (MLMF…NIIL).

It belongs to the complex I subunit 4 family.

It is found in the mitochondrion membrane. The catalysed reaction is a ubiquinone + NADH + 5 H(+)(in) = a ubiquinol + NAD(+) + 4 H(+)(out). In terms of biological role, core subunit of the mitochondrial membrane respiratory chain NADH dehydrogenase (Complex I) that is believed to belong to the minimal assembly required for catalysis. Complex I functions in the transfer of electrons from NADH to the respiratory chain. The immediate electron acceptor for the enzyme is believed to be ubiquinone. The protein is NADH-ubiquinone oxidoreductase chain 4 (MT-ND4) of Macaca fascicularis (Crab-eating macaque).